The following is a 55-amino-acid chain: Large ribosomal subunit protein bL33 (55 aa).

Belongs to the bacterial ribosomal protein bL33 family.

The chain is Large ribosomal subunit protein bL33 from Hyphomonas neptunium (strain ATCC 15444).